The sequence spans 480 residues: Ribosomal RNA small subunit methyltransferase F (480 aa).

S-adenosyl-L-methionine-binding positions include 126–132 (AAAPGSK), Glu-150, Asp-177, and Asp-195. Residue Cys-248 is the Nucleophile of the active site.

The protein belongs to the class I-like SAM-binding methyltransferase superfamily. RsmB/NOP family.

It localises to the cytoplasm. It catalyses the reaction cytidine(1407) in 16S rRNA + S-adenosyl-L-methionine = 5-methylcytidine(1407) in 16S rRNA + S-adenosyl-L-homocysteine + H(+). Functionally, specifically methylates the cytosine at position 1407 (m5C1407) of 16S rRNA. In Cronobacter sakazakii (strain ATCC BAA-894) (Enterobacter sakazakii), this protein is Ribosomal RNA small subunit methyltransferase F.